Consider the following 118-residue polypeptide: p-cumate 2,3-dioxygenase system, ferredoxin component (118 aa).

In terms of domain architecture, Rieske spans 14 to 111; sequence VGLCATDDVA…VTVEGGQIFV (98 aa). Positions 54, 56, 74, and 77 each coordinate [2Fe-2S] cluster.

This sequence belongs to the bacterial ring-hydroxylating dioxygenase ferredoxin component family. As to quaternary structure, the p-cumate 2,3-dioxygenase multicomponent enzyme system is composed of an electron transfer component and a dioxygenase component (iron sulfur protein (ISP)). The electron transfer component is composed of a ferredoxin reductase (CmtAa) and a ferredoxin (CmtAd), and the dioxygenase component is formed of a large alpha subunit (CmtAb) and a small beta subunit (CmtAc). Requires [2Fe-2S] cluster as cofactor.

It functions in the pathway aromatic compound metabolism; p-cumate degradation; acetaldehyde and pyruvate from p-cumate. Component of the p-cumate 2,3-dioxygenase multicomponent enzyme system which catalyzes the incorporation of both atoms of molecular oxygen into p-cumate to form cis-2,3-dihydroxy-2,3-dihydro-p-cumate. Functions as an intermediate electron transfer protein via a specific interaction with iron sulfur protein components (ISP)(CmtAb and CmtAc). This is p-cumate 2,3-dioxygenase system, ferredoxin component from Pseudomonas putida (Arthrobacter siderocapsulatus).